The sequence spans 952 residues: UvrABC system protein A (952 aa).

31–38 (GVSGSGKS) is an ATP binding site. The C4-type zinc finger occupies 253-280 (CPEHGSVLEELEPRIFSFNSPYGACPAC). 2 ABC transporter domains span residues 309 to 591 (WSRG…PQSL) and 611 to 938 (GNGK…AFLA). Residue 643 to 650 (GPSGSGKS) coordinates ATP. Residues 742-768 (CEACGGDGTVKIEMLFLPDLYVPCEVC) form a C4-type zinc finger.

This sequence belongs to the ABC transporter superfamily. UvrA family. In terms of assembly, forms a heterotetramer with UvrB during the search for lesions.

The protein resides in the cytoplasm. Its function is as follows. The UvrABC repair system catalyzes the recognition and processing of DNA lesions. UvrA is an ATPase and a DNA-binding protein. A damage recognition complex composed of 2 UvrA and 2 UvrB subunits scans DNA for abnormalities. When the presence of a lesion has been verified by UvrB, the UvrA molecules dissociate. The polypeptide is UvrABC system protein A (Thermus thermophilus (strain ATCC 27634 / DSM 579 / HB8)).